We begin with the raw amino-acid sequence, 372 residues long: N-acetyllactosaminide beta-1,3-N-acetylglucosaminyltransferase 3 (372 aa).

Topologically, residues 1-10 (MKYLRHRRPN) are cytoplasmic. A helical; Signal-anchor for type II membrane protein transmembrane segment spans residues 11–31 (ATLILAIGAFTLLLFSLLVSP). Residues 32–372 (PTCKVQEQPP…LTCGNQTQIY (341 aa)) are Lumenal-facing. N-linked (GlcNAc...) asparagine glycans are attached at residues asparagine 64, asparagine 184, asparagine 202, asparagine 362, and asparagine 367.

The protein belongs to the glycosyltransferase 31 family. Expressed in colon, jejunum, stomach, esophagus, placenta and trachea.

It localises to the golgi apparatus membrane. The enzyme catalyses a 3-O-{beta-D-galactosyl-(1-&gt;3)-[N-acetyl-beta-D-glucosaminyl-(1-&gt;6)]-N-acetyl-alpha-D-galactosaminyl}-L-threonyl-[protein] + UDP-N-acetyl-alpha-D-glucosamine = 3-O-{beta-D-GlcNAc-(1-&gt;3)-beta-D-Gal-(1-&gt;3)-[beta-D-GlcNAc-(1-&gt;6)]-alpha-D-GalNAc}-L-threonyl-[protein] + UDP + H(+). It carries out the reaction 3-O-{beta-D-galactosyl-(1-&gt;3)-[N-acetyl-beta-D-glucosaminyl-(1-&gt;6)]-N-acetyl-alpha-D-galactosaminyl}-L-seryl-[protein] + UDP-N-acetyl-alpha-D-glucosamine = 3-O-{beta-D-GlcNAc-(1-&gt;3)-beta-D-Gal-(1-&gt;3)-[beta-D-GlcNAc-(1-&gt;6)]-alpha-D-GalNAc}-L-seryl-[protein] + UDP + H(+). It catalyses the reaction a beta-D-galactosyl-(1-&gt;4)-N-acetyl-beta-D-glucosaminyl derivative + UDP-N-acetyl-alpha-D-glucosamine = an N-acetyl-beta-D-glucosaminyl-(1-&gt;3)-beta-D-galactosyl-(1-&gt;4)-N-acetyl-beta-D-glucosaminyl derivative + UDP + H(+). It participates in protein modification; protein glycosylation. Its function is as follows. Beta-1,3-N-acetylglucosaminyltransferase involved in the synthesis of poly-N-acetyllactosamine. Has activity for type 2 oligosaccharides. Also acts as a core1-1,3-N-acetylglucosaminyltransferase (Core1-beta3GlcNAcT) to form the 6-sulfo sialyl Lewis x on extended core1 O-glycans. This is N-acetyllactosaminide beta-1,3-N-acetylglucosaminyltransferase 3 (B3GNT3) from Homo sapiens (Human).